An 851-amino-acid polypeptide reads, in one-letter code: Putative serine/threonine-protein kinase 019R (851 aa).

Disordered regions lie at residues 1–24, 61–91, 104–160, 190–216, and 340–400; these read MATN…RTIK, PRVA…RGGP, GGAS…KRGG, GLSP…ARRS, and SRPS…GEPR. Low complexity predominate over residues 125 to 141; it reads ARRQSPAEAAEASPCPE. Residues 196–216 show a composition bias toward basic residues; the sequence is SHMRKSPARRSPARRSPARRS. The span at 340–366 shows a compositional bias: low complexity; sequence SRPSGVSRTSGTSGSSGSSASSRPPNS. The 396-residue stretch at 456–851 folds into the Protein kinase domain; sequence AVSDNVIGQG…GEREIESFTM (396 aa). Residues 462–470 and lysine 485 contribute to the ATP site; that span reads IGQGSWGSV. Catalysis depends on aspartate 608, which acts as the Proton acceptor.

Belongs to the protein kinase superfamily. Ser/Thr protein kinase family.

The enzyme catalyses L-seryl-[protein] + ATP = O-phospho-L-seryl-[protein] + ADP + H(+). It catalyses the reaction L-threonyl-[protein] + ATP = O-phospho-L-threonyl-[protein] + ADP + H(+). In Dryophytes versicolor (chameleon treefrog), this protein is Putative serine/threonine-protein kinase 019R.